Here is a 134-residue protein sequence, read N- to C-terminus: Protein Turandot E (134 aa).

Positions 1 to 38 are cleaved as a signal peptide; sequence MSYTRTVHSSTSILKMNSALQISCLLVVLGCLLGSGHC.

It belongs to the Turandot family.

It is found in the secreted. A humoral factor that may play a role in stress tolerance. The protein is Protein Turandot E of Drosophila simulans (Fruit fly).